The primary structure comprises 575 residues: Malto-oligosyltrehalose trehalohydrolase (575 aa).

248–253 lines the substrate pocket; the sequence is RLDAVH. Aspartate 250 functions as the Nucleophile in the catalytic mechanism. The active-site Proton donor is glutamate 287. Substrate-binding positions include 312–316 and 381–386; these read DDVHH and HDQVGN.

It belongs to the glycosyl hydrolase 13 family.

It localises to the cytoplasm. It catalyses the reaction hydrolysis of (1-&gt;4)-alpha-D-glucosidic linkage in 4-alpha-D-[(1-&gt;4)-alpha-D-glucanosyl]n trehalose to yield trehalose and (1-&gt;4)-alpha-D-glucan.. The protein operates within glycan biosynthesis; trehalose biosynthesis. This Arthrobacter ramosus protein is Malto-oligosyltrehalose trehalohydrolase (treZ).